Reading from the N-terminus, the 515-residue chain is Pre-glycoprotein polyprotein GP complex (515 aa).

The N-myristoyl glycine; by host moiety is linked to residue Gly-2. Residues 2–17 (GQVIGFFQSLPEIINE) lie on the Extracellular side of the membrane. The helical transmembrane segment at 18–33 (ALNIALICVALLATIK) threads the bilayer. At 34–58 (GMVNIWKSGLIQLLFFLTLAGRSCS) the chain is on the cytoplasmic side. Residue Cys-57 participates in Zn(2+) binding. Residues 59–453 (HSFTIGRFHE…QGRTPLSLVD (395 aa)) lie on the Extracellular side of the membrane. 4 disulfide bridges follow: Cys-87–Cys-255, Cys-300–Cys-313, Cys-322–Cys-331, and Cys-385–Cys-406. Residues Asn-90, Asn-112, Asn-127, Asn-180, and Asn-248 are each glycosylated (N-linked (GlcNAc...) asparagine; by host). N-linked (GlcNAc...) asparagine; by host glycans are attached at residues Asn-386, Asn-394, and Asn-416. The helical transmembrane segment at 454-474 (LCFWSTLFYISTLFAHLVGFP) threads the bilayer. The Cytoplasmic portion of the chain corresponds to 475–515 (THRHLIGEGCPKPHRLTGSGICSCGHYGIPGKPVRWTKMSR). Residues His-476, His-478, Cys-484, His-488, Cys-496, and Cys-498 each contribute to the Zn(2+) site.

Belongs to the arenaviridae GPC protein family. In terms of assembly, interacts with glycoprotein G2. Part of the GP complex (GP-C) together with glycoprotein G1 and glycoprotein G2. The GP-complex interacts with protein Z, which interacts with ribonucleocapsid; these interactions may induce virion budding. Homotrimer; disulfide-linked. In pre-fusion state, G1 homotrimers bind G2 homotrimers via ionic interactions. Part of the GP complex (GP-C) together with glycoprotein G2 and the stable signal peptide. The GP-complex interacts with protein Z, which interacts with ribonucleocapsid; these interactions may induce virion budding. As to quaternary structure, homotrimer. Interacts with the stable signal peptide. In pre-fusion state, G2 homotrimers bind G1 homotrimers via ionic interactions. Part of the GP complex (GP-C) together with glycoprotein G1 and the stable signal peptide. Acidification in the endosome triggers rearrangements, which ultimately leads to a 6 helix bundle formed by the two heptad repeat domains (HR1 and HR2) in post-fusion state. The GP-complex interacts with protein Z, which interacts with ribonucleocapsid; these interactions may induce virion budding. Post-translationally, specific enzymatic cleavages in vivo yield mature proteins. GP-C polyprotein is cleaved in the endoplasmic reticulum by the host protease MBTPS1. Only cleaved glycoprotein is incorporated into virions. The SSP remains stably associated with the GP complex following cleavage by signal peptidase and plays crucial roles in the trafficking of GP through the secretory pathway. In terms of processing, myristoylation is necessary for GP2-mediated fusion activity.

It is found in the virion membrane. Its subcellular location is the host endoplasmic reticulum membrane. The protein resides in the host Golgi apparatus membrane. It localises to the host cell membrane. Its function is as follows. Functions as a cleaved signal peptide that is retained as the third component of the GP complex (GP-C). Helps to stabilize the spike complex in its native conformation. The SSP is required for efficient glycoprotein expression, post-translational maturation cleavage of G1 and G2, glycoprotein transport to the cell surface plasma membrane, formation of infectious virus particles, and acid pH-dependent glycoprotein-mediated cell fusion. In terms of biological role, forms the virion spikes together with glycoprotein G2. The glycoprotein spike trimers are connected to the underlying matrix. Mediates virus attachment to host receptor alpha-dystroglycan DAG1. This attachment induces virion internalization predominantly through clathrin- and caveolin-independent endocytosis. Forms the virion spikes together with glycoprotein G1. The glycoprotein spike trimers are connected to the underlying matrix. Class I viral fusion protein that directs fusion of viral and host endosomal membranes, leading to delivery of the nucleocapsid into the cytoplasm. Membrane fusion is mediated by irreversible conformational changes induced by acidification. This Latino mammarenavirus (isolate Rat/Bolivia/MARU 1924/1965) (LATV) protein is Pre-glycoprotein polyprotein GP complex.